Here is a 687-residue protein sequence, read N- to C-terminus: Chloride channel protein ClC-Ka (687 aa).

The next 5 helical transmembrane spans lie at 52–72, 94–114, 161–181, 204–224, and 236–256; these read FLVALGVLMALISYAMNFAIG, LSWTVYPVALLSFSSGFSQSI, IFLGKVGPFVHLSVMISAYLG, AAAVGVATVFAAPFSGVLFSI, and YWRGFFAATCGAFMFRLLGVF. 4 residues coordinate Ca(2+): Glu259, Glu261, Asp278, and Glu281. Helical transmembrane passes span 282-302, 325-345, 396-416, 417-437, 458-478, and 486-506; these read IFFFVALGFICGVLSCAYLFC, PSYAALVALVLASITYPPGVG, FTIFGTLAFFLVMKFWMLILA, TTIPMPAGYFMPIFIIGAAIG, VNPIMPGGYALAGAAAFSGAV, and LLAFELTGQIVHALPVLMAVL. Residues 507 to 687 are Cytoplasmic-facing; that stretch reads AANAISQNCQ…STLINPPAPK (181 aa). 2 consecutive CBS domains span residues 551–609 and 626–687; these read MNCN…QPAS and CPTQ…PAPK.

The protein belongs to the chloride channel (TC 2.A.49) family. CLCNKA subfamily. As to quaternary structure, homodimer. Interacts with BSND. Expressed predominantly in the kidney. Expressed strongly in the cortical thick ascending limb and the distal convoluted tubule, with minor expression in the S3 segment of the proximal tubule and the cortical collecting tubule.

Its subcellular location is the basolateral cell membrane. The enzyme catalyses chloride(in) = chloride(out). The catalysed reaction is bromide(in) = bromide(out). It carries out the reaction nitrate(in) = nitrate(out). It catalyses the reaction iodide(out) = iodide(in). With respect to regulation, activated by extracellular Ca(2+) and inhibited by extracellular acidic pH. Functionally, anion-selective channel permeable to small monovalent anions with ion selectivity for chloride &gt; bromide &gt; nitrate &gt; iodide. Forms a homodimeric channel where each subunit has its own ion conduction pathway. Conducts double-barreled currents controlled by two types of gates, two fast gates that control each subunit independently and a slow common gate that opens and shuts off both subunits simultaneously. Assembles with the regulatory subunit BSND/Barttin for sorting at the basolateral plasma membrane domain. CLCNKA:BSND channels are activated upon membrane hyperpolarization mostly controlled by fast gating. Mediates transepithelial chloride transport from the lumen to interstitial compartment along the thin ascending limb of Henle's loop, contributing to generation of hypertonic medullary interstitium as a countercurrent system to achieve urine concentration. Conducts chloride currents in the stria vascularis of the inner ear to establish the endocochlear potential necessary for normal hearing. In Rattus norvegicus (Rat), this protein is Chloride channel protein ClC-Ka.